Consider the following 898-residue polypeptide: Nitrate reductase [NAD(P)H] (898 aa).

Basic and acidic residues predominate over residues 1 to 15 (MAASVENRRFTHHEP). A disordered region spans residues 1 to 65 (MAASVENRRF…SSSEDENEND (65 aa)). Cysteine 180 is a binding site for Mo-molybdopterin. Positions 528–603 (SKMFSMSEVK…LEDYRIGELI (76 aa)) constitute a Cytochrome b5 heme-binding domain. The heme site is built by histidine 563 and histidine 586. The FAD-binding FR-type domain occupies 642–754 (GAKIPTKLVY…KGPLGHVEYT (113 aa)). Residues 694–697 (RAYT), 711–715 (VVKIY), phenylalanine 716, phenylalanine 723, 728–730 (LMS), and threonine 781 each bind FAD.

It belongs to the nitrate reductase family. As to quaternary structure, homodimer. It depends on FAD as a cofactor. The cofactor is heme. Mo-molybdopterin serves as cofactor.

It catalyses the reaction nitrite + NAD(+) + H2O = nitrate + NADH + H(+). The catalysed reaction is nitrite + NADP(+) + H2O = nitrate + NADPH + H(+). Functionally, nitrate reductase is a key enzyme involved in the first step of nitrate assimilation in plants, fungi and bacteria. The sequence is that of Nitrate reductase [NAD(P)H] (NIA1) from Betula pendula (European white birch).